The chain runs to 296 residues: Diheme cytochrome c-type (296 aa).

The heme c site is built by Cys52, Cys55, His56, Cys202, Cys205, and His206.

In terms of processing, binds 2 heme c groups covalently per subunit.

The protein resides in the cell membrane. Functionally, particularly expressed when cells generate energy via aerobic respiration. In Cereibacter sphaeroides (strain ATCC 17023 / DSM 158 / JCM 6121 / CCUG 31486 / LMG 2827 / NBRC 12203 / NCIMB 8253 / ATH 2.4.1.) (Rhodobacter sphaeroides), this protein is Diheme cytochrome c-type (cycG).